Consider the following 343-residue polypeptide: Protein RecA (343 aa).

64 to 71 serves as a coordination point for ATP; it reads GPESSGKT.

This sequence belongs to the RecA family.

The protein localises to the cytoplasm. In terms of biological role, can catalyze the hydrolysis of ATP in the presence of single-stranded DNA, the ATP-dependent uptake of single-stranded DNA by duplex DNA, and the ATP-dependent hybridization of homologous single-stranded DNAs. It interacts with LexA causing its activation and leading to its autocatalytic cleavage. The sequence is that of Protein RecA from Bacillus cereus (strain ATCC 14579 / DSM 31 / CCUG 7414 / JCM 2152 / NBRC 15305 / NCIMB 9373 / NCTC 2599 / NRRL B-3711).